A 187-amino-acid chain; its full sequence is Large ribosomal subunit protein bL21 (187 aa).

Residues Lys-157–Ala-187 are disordered.

The protein belongs to the bacterial ribosomal protein bL21 family. As to quaternary structure, part of the 50S ribosomal subunit. Contacts protein L20.

This protein binds to 23S rRNA in the presence of protein L20. The sequence is that of Large ribosomal subunit protein bL21 from Bdellovibrio bacteriovorus (strain ATCC 15356 / DSM 50701 / NCIMB 9529 / HD100).